The sequence spans 339 residues: Serine/threonine-protein kinase pdik1l-A (339 aa).

The Protein kinase domain occupies 8 to 332 (YDLIREVGRG…LELKLIQIAF (325 aa)). ATP contacts are provided by residues 14-22 (VGRGSYGVV) and K37. D164 acts as the Proton acceptor in catalysis.

The protein belongs to the protein kinase superfamily. Ser/Thr protein kinase family.

Its subcellular location is the nucleus. The enzyme catalyses L-seryl-[protein] + ATP = O-phospho-L-seryl-[protein] + ADP + H(+). It carries out the reaction L-threonyl-[protein] + ATP = O-phospho-L-threonyl-[protein] + ADP + H(+). This is Serine/threonine-protein kinase pdik1l-A (pdik1-a) from Xenopus laevis (African clawed frog).